A 495-amino-acid polypeptide reads, in one-letter code: Glycerol kinase (495 aa).

Thr-12 serves as a coordination point for ADP. Positions 12, 13, and 14 each coordinate ATP. Sn-glycerol 3-phosphate is bound at residue Thr-12. Arg-16 provides a ligand contact to ADP. The sn-glycerol 3-phosphate site is built by Arg-82, Glu-83, Tyr-134, and Asp-243. Residues Arg-82, Glu-83, Tyr-134, Asp-243, and Gln-244 each contribute to the glycerol site. Thr-265 and Gly-308 together coordinate ADP. 4 residues coordinate ATP: Thr-265, Gly-308, Gln-312, and Gly-409. The ADP site is built by Gly-409 and Asn-413.

The protein belongs to the FGGY kinase family.

The catalysed reaction is glycerol + ATP = sn-glycerol 3-phosphate + ADP + H(+). Its pathway is polyol metabolism; glycerol degradation via glycerol kinase pathway; sn-glycerol 3-phosphate from glycerol: step 1/1. Inhibited by fructose 1,6-bisphosphate (FBP). Functionally, key enzyme in the regulation of glycerol uptake and metabolism. Catalyzes the phosphorylation of glycerol to yield sn-glycerol 3-phosphate. This Ectopseudomonas mendocina (strain ymp) (Pseudomonas mendocina) protein is Glycerol kinase.